A 171-amino-acid chain; its full sequence is UPF0398 protein Sez_1569 (171 aa).

Belongs to the UPF0398 family.

The polypeptide is UPF0398 protein Sez_1569 (Streptococcus equi subsp. zooepidemicus (strain MGCS10565)).